We begin with the raw amino-acid sequence, 278 residues long: NAD-capped RNA hydrolase NudC (278 aa).

Arg84 serves as a coordination point for substrate. Residues Cys114 and Cys117 each contribute to the Zn(2+) site. Glu127 is a binding site for substrate. Cys132 serves as a coordination point for Zn(2+). Residue Tyr140 participates in substrate binding. In terms of domain architecture, Nudix hydrolase spans 141–264 (PRISPSMIVL…SIARYLIEAY (124 aa)). Residues Ala174, Glu190, and Glu194 each contribute to the a divalent metal cation site. Positions 175–196 (GFVEPGESAEDCVHREVMEEVQ) match the Nudix box motif. 208–215 (QCWPFPHS) serves as a coordination point for substrate. A divalent metal cation is bound at residue Glu235. Ala257 contacts substrate.

Belongs to the Nudix hydrolase family. NudC subfamily. Homodimer. Mg(2+) serves as cofactor. Mn(2+) is required as a cofactor. The cofactor is Zn(2+).

The catalysed reaction is a 5'-end NAD(+)-phospho-ribonucleoside in mRNA + H2O = a 5'-end phospho-adenosine-phospho-ribonucleoside in mRNA + beta-nicotinamide D-ribonucleotide + 2 H(+). It carries out the reaction NAD(+) + H2O = beta-nicotinamide D-ribonucleotide + AMP + 2 H(+). It catalyses the reaction NADH + H2O = reduced beta-nicotinamide D-ribonucleotide + AMP + 2 H(+). MRNA decapping enzyme that specifically removes the nicotinamide adenine dinucleotide (NAD) cap from a subset of mRNAs by hydrolyzing the diphosphate linkage to produce nicotinamide mononucleotide (NMN) and 5' monophosphate mRNA. The NAD-cap is present at the 5'-end of some mRNAs and stabilizes RNA against 5'-processing. Has preference for mRNAs with a 5'-end purine. Catalyzes the hydrolysis of a broad range of dinucleotide pyrophosphates. This is NAD-capped RNA hydrolase NudC from Pseudomonas syringae pv. syringae (strain B728a).